A 158-amino-acid polypeptide reads, in one-letter code: NAD(P)H-quinone oxidoreductase subunit N (158 aa).

This sequence belongs to the complex I NdhN subunit family. As to quaternary structure, NDH-1 can be composed of about 15 different subunits; different subcomplexes with different compositions have been identified which probably have different functions.

The protein localises to the cellular thylakoid membrane. The enzyme catalyses a plastoquinone + NADH + (n+1) H(+)(in) = a plastoquinol + NAD(+) + n H(+)(out). It carries out the reaction a plastoquinone + NADPH + (n+1) H(+)(in) = a plastoquinol + NADP(+) + n H(+)(out). Its function is as follows. NDH-1 shuttles electrons from an unknown electron donor, via FMN and iron-sulfur (Fe-S) centers, to quinones in the respiratory and/or the photosynthetic chain. The immediate electron acceptor for the enzyme in this species is believed to be plastoquinone. Couples the redox reaction to proton translocation, and thus conserves the redox energy in a proton gradient. Cyanobacterial NDH-1 also plays a role in inorganic carbon-concentration. This Prochlorococcus marinus (strain MIT 9215) protein is NAD(P)H-quinone oxidoreductase subunit N.